The chain runs to 545 residues: CTP synthase (545 aa).

The interval 1-266 (MATNYIFVTG…DDFVCERFRL (266 aa)) is amidoligase domain. Position 14 (S14) interacts with CTP. S14 provides a ligand contact to UTP. ATP is bound by residues 15–20 (SLGKGI) and D72. Mg(2+) is bound by residues D72 and E140. CTP contacts are provided by residues 147–149 (DIE), 187–192 (KTKPTQ), and K223. Residues 187–192 (KTKPTQ) and K223 contribute to the UTP site. 239–241 (KDV) lines the ATP pocket. Residues 291-542 (TIGMVGKYTE…VKAAYENHKK (252 aa)) enclose the Glutamine amidotransferase type-1 domain. G352 is a binding site for L-glutamine. The active-site Nucleophile; for glutamine hydrolysis is the C379. L-glutamine is bound by residues 380–383 (LGMQ), E403, and R470. Active-site residues include H515 and E517.

The protein belongs to the CTP synthase family. As to quaternary structure, homotetramer.

The enzyme catalyses UTP + L-glutamine + ATP + H2O = CTP + L-glutamate + ADP + phosphate + 2 H(+). It carries out the reaction L-glutamine + H2O = L-glutamate + NH4(+). It catalyses the reaction UTP + NH4(+) + ATP = CTP + ADP + phosphate + 2 H(+). It participates in pyrimidine metabolism; CTP biosynthesis via de novo pathway; CTP from UDP: step 2/2. With respect to regulation, allosterically activated by GTP, when glutamine is the substrate; GTP has no effect on the reaction when ammonia is the substrate. The allosteric effector GTP functions by stabilizing the protein conformation that binds the tetrahedral intermediate(s) formed during glutamine hydrolysis. Inhibited by the product CTP, via allosteric rather than competitive inhibition. Functionally, catalyzes the ATP-dependent amination of UTP to CTP with either L-glutamine or ammonia as the source of nitrogen. Regulates intracellular CTP levels through interactions with the four ribonucleotide triphosphates. This chain is CTP synthase, found in Haemophilus influenzae (strain PittGG).